Consider the following 359-residue polypeptide: DNA replication and repair protein RecF (359 aa).

Residue 30–37 (GPNGSGKT) participates in ATP binding.

This sequence belongs to the RecF family.

Its subcellular location is the cytoplasm. In terms of biological role, the RecF protein is involved in DNA metabolism; it is required for DNA replication and normal SOS inducibility. RecF binds preferentially to single-stranded, linear DNA. It also seems to bind ATP. The polypeptide is DNA replication and repair protein RecF (Aliivibrio fischeri (strain MJ11) (Vibrio fischeri)).